The chain runs to 853 residues: DNA mismatch repair protein MutS (853 aa).

Residue 614–621 (GPNMGGKS) coordinates ATP.

It belongs to the DNA mismatch repair MutS family.

This protein is involved in the repair of mismatches in DNA. It is possible that it carries out the mismatch recognition step. This protein has a weak ATPase activity. The protein is DNA mismatch repair protein MutS of Enterobacter sp. (strain 638).